The sequence spans 340 residues: Guanine nucleotide-binding protein subunit beta-4 (340 aa).

The residue at position 2 (Ser2) is an N-acetylserine. The residue at position 2 (Ser2) is a Phosphoserine. WD repeat units follow at residues 53–92 (GHLA…KMHA), 95–134 (LRSS…GNVR), 141–179 (GHTG…QTTT), 182–221 (GHSG…CRQS), and 224–263 (GHVS…ELLL). His266 is modified (phosphohistidine). WD repeat units follow at residues 268-307 (NIIC…RAGV) and 310-339 (GHDN…LRIW).

This sequence belongs to the WD repeat G protein beta family. As to quaternary structure, g proteins are composed of 3 units, alpha, beta and gamma. As to expression, strongly expressed in lung and placenta, whereas it is weakly expressed in brain and heart. Abundantly expressed in the axons and Schwann cells of peripheral nerves.

Its function is as follows. Guanine nucleotide-binding proteins (G proteins) are involved as a modulator or transducer in various transmembrane signaling systems. The beta and gamma chains are required for the GTPase activity, for replacement of GDP by GTP, and for G protein-effector interaction. This chain is Guanine nucleotide-binding protein subunit beta-4 (GNB4), found in Homo sapiens (Human).